A 471-amino-acid polypeptide reads, in one-letter code: 7-dehydrocholesterol reductase (471 aa).

A disordered region spans residues 1 to 23; the sequence is MASKSQHNAPKVKSPNGKAGSQG. Serine 14 carries the phosphoserine modification. The next 8 helical transmembrane spans lie at 36 to 56, 95 to 115, 144 to 164, 173 to 193, 233 to 253, 262 to 282, 302 to 322, and 327 to 347; these read LASI…FIMA, LYAL…DFCH, LQAW…LSWF, WIPL…FAMI, LFFN…SFAA, VTNS…DFFW, LGWG…LYLV, and QLST…YYIF. NADP(+) is bound by residues lysine 354, arginine 358, leucine 391, tryptophan 396, and 403-404; that span reads NY. A helical transmembrane segment spans residues 416–436; that stretch reads LACGGGHLLPYFYIIYMTILL. NADP(+) is bound by residues aspartate 443, 447–451, and tyrosine 458; that span reads CANKY.

Belongs to the ERG4/ERG24 family. Interacts with DHCR24; this interaction regulates DHCR7 activity. Interacts with TMEM147.

It is found in the endoplasmic reticulum membrane. The catalysed reaction is cholesterol + NADP(+) = 7-dehydrocholesterol + NADPH + H(+). It carries out the reaction 7-dehydrodesmosterol + NADPH + H(+) = desmosterol + NADP(+). It catalyses the reaction 5,6alpha-epoxy-5alpha-cholestan-3beta-ol + H2O = 5alpha-cholestane-3beta,5,6beta-triol. The enzyme catalyses 5,6beta-epoxy-5beta-cholestan-3beta-ol + H2O = 5alpha-cholestane-3beta,5,6beta-triol. Its pathway is steroid biosynthesis; cholesterol biosynthesis. Oxidoreductase that catalyzes the last step of the cholesterol synthesis pathway, which transforms cholesta-5,7-dien-3beta-ol (7-dehydrocholesterol,7-DHC) into cholesterol by reducing the C7-C8 double bond of its sterol core. Can also metabolize cholesta-5,7,24-trien-3beta-ol (7-dehydrodemosterol, 7-DHD) to desmosterol, which is then metabolized by the Delta(24)-sterol reductase (DHCR24) to cholesterol. Modulates ferroptosis (a form of regulated cell death driven by iron-dependent lipid peroxidation) through the metabolic breakdown of the anti-ferroptotic metabolites 7-DHC and 7-DHD which, when accumulated, divert the propagation of peroxyl radical-mediated damage from phospholipid components to its sterol core, protecting plasma and mitochondrial membranes from phospholipid autoxidation. In terms of biological role, component of the microsomal antiestrogen binding site (AEBS), a multiproteic complex at the ER membrane that consists of an association between cholestenol Delta-isomerase/EBP and DHCR7. This complex is responsible for cholesterol-5,6-epoxide hydrolase (ChEH) activity, which consists in the hydration of cholesterol-5,6-epoxides (5,6-EC) into cholestane-3beta,5alpha,6beta-triol (CT). The precise role of each component of this complex has not been described yet. The protein is 7-dehydrocholesterol reductase (Dhcr7) of Mus musculus (Mouse).